A 137-amino-acid chain; its full sequence is Holo-[acyl-carrier-protein] synthase (137 aa).

Residues D8 and E58 each coordinate Mg(2+).

The protein belongs to the P-Pant transferase superfamily. AcpS family. The cofactor is Mg(2+).

It is found in the cytoplasm. It carries out the reaction apo-[ACP] + CoA = holo-[ACP] + adenosine 3',5'-bisphosphate + H(+). Its function is as follows. Transfers the 4'-phosphopantetheine moiety from coenzyme A to a Ser of acyl-carrier-protein. The protein is Holo-[acyl-carrier-protein] synthase of Lactobacillus delbrueckii subsp. bulgaricus (strain ATCC 11842 / DSM 20081 / BCRC 10696 / JCM 1002 / NBRC 13953 / NCIMB 11778 / NCTC 12712 / WDCM 00102 / Lb 14).